A 275-amino-acid chain; its full sequence is Large ribosomal subunit protein uL2 (275 aa).

Disordered stretches follow at residues 24 to 54 (LYKG…VRHQ) and 223 to 275 (VAMN…RHKR). 2 stretches are compositionally biased toward basic and acidic residues: residues 25–38 (YKGR…EKKT) and 229–241 (DHPH…RTGE).

Belongs to the universal ribosomal protein uL2 family. Part of the 50S ribosomal subunit. Forms a bridge to the 30S subunit in the 70S ribosome.

In terms of biological role, one of the primary rRNA binding proteins. Required for association of the 30S and 50S subunits to form the 70S ribosome, for tRNA binding and peptide bond formation. It has been suggested to have peptidyltransferase activity; this is somewhat controversial. Makes several contacts with the 16S rRNA in the 70S ribosome. The sequence is that of Large ribosomal subunit protein uL2 from Azoarcus sp. (strain BH72).